A 171-amino-acid polypeptide reads, in one-letter code: Sec-independent protein translocase protein TatB (171 aa).

Residues 1–21 traverse the membrane as a helical segment; that stretch reads MFDIGFSELLLVFIIGLVVLG. Residues 117 to 171 form a disordered region; that stretch reads KDNEAAHEGVTPAAAQTQASSPEQKPETTPEPVVKPAADAEPKTAAPSPSSSDKP. Positions 130–139 are enriched in polar residues; sequence AAQTQASSPE.

Belongs to the TatB family. The Tat system comprises two distinct complexes: a TatABC complex, containing multiple copies of TatA, TatB and TatC subunits, and a separate TatA complex, containing only TatA subunits. Substrates initially bind to the TatABC complex, which probably triggers association of the separate TatA complex to form the active translocon.

The protein localises to the cell inner membrane. Its function is as follows. Part of the twin-arginine translocation (Tat) system that transports large folded proteins containing a characteristic twin-arginine motif in their signal peptide across membranes. Together with TatC, TatB is part of a receptor directly interacting with Tat signal peptides. TatB may form an oligomeric binding site that transiently accommodates folded Tat precursor proteins before their translocation. The chain is Sec-independent protein translocase protein TatB from Escherichia coli O157:H7.